Reading from the N-terminus, the 152-residue chain is MATIEVEQVTPVAAENIEVPPPKAVESEEVTTVSESLPAPVTESQAPVEVTTKDLVVEETEKPIEETEEAQVETPEVVEIKKDEEAPVETPVVVEDESKTEEVVEAKKEEEVEEKKTEEAPVVVEEEKKPEAEEEKPAVEASVTAPVEKADE.

7 tandem repeats follow at residues V57 to K62, T67 to Q71, V78 to K82, V104 to K108, V112 to K116, V124 to K129, and E131 to K136. Residues V57–K136 form a 7 X 5 AA approximate repeats of V-E-E-K-K region. A disordered region spans residues T60–E152. The segment covering D96–A138 has biased composition (basic and acidic residues).

Predominantly expressed in petioles (at protein level). Mainly observed in shoots, flowers, siliques and roots, and, to a lower extent, in stems and leaves.

It localises to the cytoplasm. The protein resides in the cytosol. In terms of biological role, binds calcium Ca(2+) and may act as a signal mediator to buffer Ca(2+). This chain is Cytosolic calcium-binding protein 1, found in Arabidopsis thaliana (Mouse-ear cress).